A 260-amino-acid polypeptide reads, in one-letter code: Translation initiation factor 2 subunit alpha (260 aa).

Residues 12 to 83 enclose the S1 motif domain; it reads GDLIVGTVHK…KKGHVDASLK (72 aa).

It belongs to the eIF-2-alpha family. Heterotrimer composed of an alpha, a beta and a gamma chain.

EIF-2 functions in the early steps of protein synthesis by forming a ternary complex with GTP and initiator tRNA. This chain is Translation initiation factor 2 subunit alpha, found in Methanosphaera stadtmanae (strain ATCC 43021 / DSM 3091 / JCM 11832 / MCB-3).